Reading from the N-terminus, the 258-residue chain is L-2,3-butanediol dehydrogenase (258 aa).

NAD(+)-binding positions include 12 to 14 (QGI), D33, Q37, 61 to 62 (DV), N88, Y154, K158, and 184 to 189 (PGIVGT). Y154 acts as the Proton acceptor in catalysis.

The protein belongs to the short-chain dehydrogenases/reductases (SDR) family. In terms of assembly, homotetramer.

It catalyses the reaction (S,S)-butane-2,3-diol + NAD(+) = (S)-acetoin + NADH + H(+). It carries out the reaction (S)-acetoin + NAD(+) = diacetyl + NADH + H(+). With respect to regulation, slightly activated by Ba(2+), Ca(2+), Mn(2+), Mg(2+), and Co(2+), while Hg(2+) and Cu(2+) cause marked inhibition of the activity. Ni(2+), Zn(2+) and Cd(2+) have no effect on the catalytic activity. Is also slightly inhibited by lactate, pyruvate, succinate, acetate and formate. Functionally, catalyzes the reversible reduction of (S)-acetoin to (S,S)-butane-2,3-diol (L-BD) in the presence of NADH. To a lesser extent, can also catalyze the irreversible reduction of diacetyl to (S)-acetoin. Cannot oxidize meso-BD, D-BD, 2-butanol, 1,2-propanediol, ethanol, acetol, 1,2-butanediol, 1,3-butanediol, n-butanol, and n-propanol. Cannot reduce (R)-acetoin, acetol, dihydroxyacetone and 2,4-pentanedione. The sequence is that of L-2,3-butanediol dehydrogenase from Corynebacterium glutamicum (Brevibacterium saccharolyticum).